Consider the following 298-residue polypeptide: MDIFISKKMRNFILLAQTNNIARAAEKIHMTASPFGKSIAALEEQIGYTLFTRKDNNISLNKAGQELYQKLFPVYQRLSAIDNEIHNSGRRSREIVIGIDNTYPTIIFDQLISLGDKYEGVTAQPVEFSENGVIDNLFDRQLDFIISPQHVSARVQELENLTISELPPLRLGFLVSRRYEERQEQELLQELPWLQMRFQNRANFEAMIDANMRPCGINPTIIYRPYSFMAKISAVERGHFLTVIPHFAWRLVNPATLKYFDAPHRPMYMQEYLYSIRNHRYTATMLQHIAEDRDGTSH.

An HTH lysR-type domain is found at 1–61; the sequence is MDIFISKKMR…TRKDNNISLN (61 aa). Residues 21 to 40 constitute a DNA-binding region (H-T-H motif); the sequence is IARAAEKIHMTASPFGKSIA.

The protein belongs to the LysR transcriptional regulatory family.

This is an uncharacterized protein from Escherichia coli (strain K12).